Reading from the N-terminus, the 180-residue chain is Large ribosomal subunit protein uL6 (180 aa).

Belongs to the universal ribosomal protein uL6 family. In terms of assembly, part of the 50S ribosomal subunit.

Its function is as follows. This protein binds to the 23S rRNA, and is important in its secondary structure. It is located near the subunit interface in the base of the L7/L12 stalk, and near the tRNA binding site of the peptidyltransferase center. This chain is Large ribosomal subunit protein uL6, found in Clostridium botulinum (strain Langeland / NCTC 10281 / Type F).